We begin with the raw amino-acid sequence, 500 residues long: Glycogen synthase (500 aa).

Position 15 (K15) interacts with ADP-alpha-D-glucose.

The protein belongs to the glycosyltransferase 1 family. Bacterial/plant glycogen synthase subfamily.

The enzyme catalyses [(1-&gt;4)-alpha-D-glucosyl](n) + ADP-alpha-D-glucose = [(1-&gt;4)-alpha-D-glucosyl](n+1) + ADP + H(+). It functions in the pathway glycan biosynthesis; glycogen biosynthesis. Its function is as follows. Synthesizes alpha-1,4-glucan chains using ADP-glucose. This Protochlamydia amoebophila (strain UWE25) protein is Glycogen synthase.